The sequence spans 139 residues: Tol-Pal system protein TolR (139 aa).

The chain crosses the membrane as a helical span at residues 15–35 (IVPFLDVLLVLVLIFMATAPI).

This sequence belongs to the ExbD/TolR family. The Tol-Pal system is composed of five core proteins: the inner membrane proteins TolA, TolQ and TolR, the periplasmic protein TolB and the outer membrane protein Pal. They form a network linking the inner and outer membranes and the peptidoglycan layer.

It is found in the cell inner membrane. Its function is as follows. Part of the Tol-Pal system, which plays a role in outer membrane invagination during cell division and is important for maintaining outer membrane integrity. In Haemophilus influenzae (strain ATCC 51907 / DSM 11121 / KW20 / Rd), this protein is Tol-Pal system protein TolR.